Consider the following 727-residue polypeptide: AN1-type zinc finger protein 4 (727 aa).

The Ubiquitin-like domain maps to 28–103 (MELFIETLTG…LKLVLAMRGG (76 aa)). Disordered stretches follow at residues 187–217 (HRMS…IIEN) and 238–264 (KKPK…TAPS). The segment covering 238–248 (KKPKKAVKIKP) has biased composition (basic residues). The AN1-type zinc finger occupies 661–708 (KKTTNHCFLCGKKTGLASSYECRCGNNFCASHRYAETHGCTYDYKSAG). Positions 667, 670, 682, 684, 689, 692, 698, and 700 each coordinate Zn(2+).

The polypeptide is AN1-type zinc finger protein 4 (ZFAND4) (Homo sapiens (Human)).